The chain runs to 155 residues: V-type proton ATPase 16 kDa proteolipid subunit c (155 aa).

Residues 1-10 (MSESKSGPEY) are Lumenal-facing. A helical transmembrane segment spans residues 11-33 (ASFFAVMGASAAMVFSALGAAYG). Residues 34–55 (TAKSGTGIAAMSVMRPEQIMKS) lie on the Cytoplasmic side of the membrane. The chain crosses the membrane as a helical span at residues 56–76 (IIPVVMAGIIAIYGLVVAVLI). At 77–92 (ANSLNDDISLYKSFLQ) the chain is on the lumenal side. Residues 93–114 (LGAGLSVGLSGLAAGFAIGIVG) traverse the membrane as a helical segment. At 115–131 (DAGVRGTAQQPRLFVGM) the chain is on the cytoplasmic side. Residues 132–152 (ILILIFAEVLGLYGLIVALIL) traverse the membrane as a helical segment. The Lumenal segment spans residues 153–155 (STK).

Belongs to the V-ATPase proteolipid subunit family. As to quaternary structure, V-ATPase is a heteromultimeric enzyme made up of two complexes: the ATP-hydrolytic V1 complex and the proton translocation V0 complex. The V1 complex consists of three catalytic AB heterodimers that form a heterohexamer, three peripheral stalks each consisting of EG heterodimers, one central rotor including subunits D and F, and the regulatory subunits C and H. The proton translocation complex V0 consists of the proton transport subunit a, a ring of proteolipid subunits c9c'', rotary subunit d, subunits e and f, and the accessory subunits ATP6AP1/Ac45 and ATP6AP2/PRR. Interacts with the V0 complex V-ATPase subunit a4 ATP6V0A4. Interacts with LASS2. Interacts with RNF182; this interaction leads to ubiquitination and degradation via the proteasome pathway. In terms of assembly, (Microbial infection) Interacts with HTLV-1 accessory protein p12I. Ubiquitinated by RNF182, leading to its degradation via the ubiquitin-proteasome pathway.

The protein localises to the cytoplasmic vesicle. Its subcellular location is the clathrin-coated vesicle membrane. It is found in the secretory vesicle. The protein resides in the synaptic vesicle membrane. In terms of biological role, proton-conducting pore forming subunit of the V0 complex of vacuolar(H+)-ATPase (V-ATPase), a multisubunit enzyme composed of a peripheral complex (V1) that hydrolyzes ATP and a membrane integral complex (V0) that translocates protons. V-ATPase is responsible for acidifying and maintaining the pH of intracellular compartments, and in some cell types, it is targeted to the plasma membrane, where it is responsible for acidifying the extracellular environment. This chain is V-type proton ATPase 16 kDa proteolipid subunit c (ATP6V0C), found in Homo sapiens (Human).